Reading from the N-terminus, the 217-residue chain is Guanylate kinase (217 aa).

Residues Met1–Ser10 are compositionally biased toward low complexity. Positions Met1–Gly30 are disordered. The Guanylate kinase-like domain occupies Gly30–Tyr208. Residue Gly37 to Gly44 participates in ATP binding.

The protein belongs to the guanylate kinase family.

Its subcellular location is the cytoplasm. The enzyme catalyses GMP + ATP = GDP + ADP. The catalysed reaction is dZMP + ATP = dZDP + ADP. It participates in purine metabolism. Essential for recycling GMP and indirectly, cGMP. In terms of biological role, (Microbial infection) Catalyzes the phosphorylation of dZMP to dZDP, when the bacterium is infected by a phage that produces the substrate for the synthesis of dZTP (2- amino-2'-deoxyadenosine 5'-triphosphate), which is then used by the phage as a DNA polymerase substrate. The chain is Guanylate kinase from Synechococcus sp. (strain JA-3-3Ab) (Cyanobacteria bacterium Yellowstone A-Prime).